The sequence spans 228 residues: Cytochrome c oxidase subunit 2 (228 aa).

Residues 1-14 (MPHASQLSLQEAMG) lie on the Mitochondrial intermembrane side of the membrane. The helical transmembrane segment at 15 to 45 (PTMEEVIFLHDHVLLLTCLMTMVITMFTLTA) threads the bilayer. The Mitochondrial matrix segment spans residues 46-59 (TTTALTHNDPTEEV). A helical transmembrane segment spans residues 60–87 (EQLEAAWTVAPIMILILTALPSVRSLYL). Residues 88–228 (MEEVFNPYLT…HFEQWLISEQ (141 aa)) are Mitochondrial intermembrane-facing. The Cu cation site is built by His-162, Cys-197, Glu-199, Cys-201, His-205, and Met-208. Glu-199 lines the Mg(2+) pocket.

Belongs to the cytochrome c oxidase subunit 2 family. As to quaternary structure, component of the cytochrome c oxidase (complex IV, CIV), a multisubunit enzyme composed of 14 subunits. The complex is composed of a catalytic core of 3 subunits MT-CO1, MT-CO2 and MT-CO3, encoded in the mitochondrial DNA, and 11 supernumerary subunits COX4I, COX5A, COX5B, COX6A, COX6B, COX6C, COX7A, COX7B, COX7C, COX8 and NDUFA4, which are encoded in the nuclear genome. The complex exists as a monomer or a dimer and forms supercomplexes (SCs) in the inner mitochondrial membrane with NADH-ubiquinone oxidoreductase (complex I, CI) and ubiquinol-cytochrome c oxidoreductase (cytochrome b-c1 complex, complex III, CIII), resulting in different assemblies (supercomplex SCI(1)III(2)IV(1) and megacomplex MCI(2)III(2)IV(2)). Found in a complex with TMEM177, COA6, COX18, COX20, SCO1 and SCO2. Interacts with TMEM177 in a COX20-dependent manner. Interacts with COX20. Interacts with COX16. The cofactor is Cu cation.

The protein resides in the mitochondrion inner membrane. The enzyme catalyses 4 Fe(II)-[cytochrome c] + O2 + 8 H(+)(in) = 4 Fe(III)-[cytochrome c] + 2 H2O + 4 H(+)(out). Component of the cytochrome c oxidase, the last enzyme in the mitochondrial electron transport chain which drives oxidative phosphorylation. The respiratory chain contains 3 multisubunit complexes succinate dehydrogenase (complex II, CII), ubiquinol-cytochrome c oxidoreductase (cytochrome b-c1 complex, complex III, CIII) and cytochrome c oxidase (complex IV, CIV), that cooperate to transfer electrons derived from NADH and succinate to molecular oxygen, creating an electrochemical gradient over the inner membrane that drives transmembrane transport and the ATP synthase. Cytochrome c oxidase is the component of the respiratory chain that catalyzes the reduction of oxygen to water. Electrons originating from reduced cytochrome c in the intermembrane space (IMS) are transferred via the dinuclear copper A center (CU(A)) of subunit 2 and heme A of subunit 1 to the active site in subunit 1, a binuclear center (BNC) formed by heme A3 and copper B (CU(B)). The BNC reduces molecular oxygen to 2 water molecules using 4 electrons from cytochrome c in the IMS and 4 protons from the mitochondrial matrix. The polypeptide is Cytochrome c oxidase subunit 2 (MT-CO2) (Lycodon semicarinatus (Ryukyu odd-tooth snake)).